The chain runs to 86 residues: Trypsin inhibitor (86 aa).

2 cysteine pairs are disulfide-bonded: C8–C65 and C49–C58.

Its function is as follows. Serine protease inhibitor which is active against trypsin. Displays strong antifungal activity against a number of phytopathogenic fungi including M.melonis, A.cucumerina, A.solani, C.glaeosporioides and P.capsici. In Fagopyrum tataricum (Tartarian buckwheat), this protein is Trypsin inhibitor.